Consider the following 210-residue polypeptide: Putative 3-methyladenine DNA glycosylase (210 aa).

Residues 180 to 210 form a disordered region; that stretch reads SRPPPGAAAARAARAPAAPAPRPRRPRGSGP. Positions 186-196 are enriched in low complexity; that stretch reads AAAARAARAPA. Residues 201–210 are compositionally biased toward basic residues; it reads RPRRPRGSGP.

This sequence belongs to the DNA glycosylase MPG family.

The sequence is that of Putative 3-methyladenine DNA glycosylase from Anaeromyxobacter dehalogenans (strain 2CP-1 / ATCC BAA-258).